Reading from the N-terminus, the 356-residue chain is Protein SEC13 homolog (356 aa).

6 WD repeats span residues 11 to 50 (EHEDMVHHAALDFYGLLLATCSSDGSVRIFHSRKNNKALA), 54 to 95 (GHQG…DWTK), 101 to 142 (NHDS…GVWD), 149 to 205 (AHTI…WVEE), 210 to 253 (AHSD…SEWT), and 259 to 298 (TFDDAVWSISWSTTGNILAVTGGDNNVTLWKENTEGQWIR). A disordered region spans residues 307–356 (IQSKQPSHLPHSHSQQQQALQQHQQQAPSHPGPSSDSEHSSNLSNSQLSN). Low complexity predominate over residues 308–356 (QSKQPSHLPHSHSQQQQALQQHQQQAPSHPGPSSDSEHSSNLSNSQLSN).

The protein belongs to the WD repeat SEC13 family. As to quaternary structure, probable component of the nuclear pore complex (NPC). Component of the GATOR complex consisting of mio, Nup44A/Seh1, Im11, Nplr3, Nplr2, Wdr24, Wdr59 and Sec13. Within the GATOR complex, probable component of the GATOR2 subcomplex which is likely composed of mio, Nup44A/Seh1, Wdr24, Wdr59 and Sec13. Interacts with msk. Interacts (preferentially when phosphorylated) with Mad. The GATOR2 complex associates with unmet in the absence of S-adenosyl-L-methionine; the mio-Wdr24-Nup44A subcomplex is essential and sufficient for this interaction while Wdr59 and Sec13 are dispensable. This association acts as a nutrient sensor to inhibit mTORC1 signaling in the absence of methionine. In terms of tissue distribution, salivary glands.

The protein resides in the nucleus envelope. It localises to the nucleus. It is found in the nucleoplasm. The protein localises to the cytoplasm. Its subcellular location is the cytoskeleton. The protein resides in the microtubule organizing center. It localises to the centrosome. It is found in the nuclear pore complex. The protein localises to the cytoplasmic vesicle. Its subcellular location is the COPII-coated vesicle membrane. The protein resides in the endoplasmic reticulum membrane. It localises to the lysosome membrane. Functions as a component of the nuclear pore complex (NPC) and the COPII coat. At the endoplasmic reticulum, SEC13 is involved in the biogenesis of COPII-coated vesicles. Recruited to transcriptionally active chromatin at the time of transcription initiation by RNA polymerase II. Required for proper expression of ecdysone-responsive genes such as Eip74EF and Eip75B during larval development. Required for reactivation of transcription after heat shock. Required for nuclear import of phosphorylated Mad via importin msk. Has no role in classical nuclear localization signal (cNLS)-dependent nuclear import via importin-beta. Its function is as follows. A component of the GATOR subcomplex GATOR2 which functions as an activator of the amino acid-sensing branch of the mTORC1 signaling pathway. The two GATOR subcomplexes, GATOR1 and GATOR2, regulate the mTORC1 pathway in order to mediate metabolic homeostasis, female gametogenesis and the response to amino acid limitation and complete starvation. GATOR2 activates the mTORC1 signaling pathway through the inhibition of the GATOR1 subcomplex, controlling the switch to cell proliferation and growth under nutrient replete conditions and during female oocyte development. This chain is Protein SEC13 homolog, found in Drosophila melanogaster (Fruit fly).